The sequence spans 685 residues: DNA ligase (685 aa).

Residues 47-51 (DSEYD), 96-97 (SL), and glutamate 125 contribute to the NAD(+) site. The active-site N6-AMP-lysine intermediate is the lysine 127. NAD(+) is bound by residues arginine 148, glutamate 185, lysine 304, and lysine 328. 4 residues coordinate Zn(2+): cysteine 422, cysteine 425, cysteine 440, and cysteine 446. Residues 605–685 (ADAQPLKGQT…ELLALLAANA (81 aa)) form the BRCT domain.

It belongs to the NAD-dependent DNA ligase family. LigA subfamily. Mg(2+) serves as cofactor. It depends on Mn(2+) as a cofactor.

It catalyses the reaction NAD(+) + (deoxyribonucleotide)n-3'-hydroxyl + 5'-phospho-(deoxyribonucleotide)m = (deoxyribonucleotide)n+m + AMP + beta-nicotinamide D-nucleotide.. Functionally, DNA ligase that catalyzes the formation of phosphodiester linkages between 5'-phosphoryl and 3'-hydroxyl groups in double-stranded DNA using NAD as a coenzyme and as the energy source for the reaction. It is essential for DNA replication and repair of damaged DNA. This Shewanella baltica (strain OS195) protein is DNA ligase.